Here is a 229-residue protein sequence, read N- to C-terminus: Glycine betaine/carnitine/choline transport system permease protein OpuCD (229 aa).

Positions 22 to 202 constitute an ABC transmembrane type-1 domain; that stretch reads FYRHFLMSVY…LMAVIADLVM (181 aa). Transmembrane regions (helical) follow at residues 27-47, 55-74, 78-100, 148-168, and 182-202; these read LMSVYGVLFAAIVGIPLGILI, GWVFAVTNVIQTIPALAMLA, LVMGLGANTVILSLFLYSLLPII, ALVIAIGITAIGTFVGAGGLG, and AIILAGAIPTALMAVIADLVM.

It belongs to the binding-protein-dependent transport system permease family. CysTW subfamily. The complex is composed of two ATP-binding proteins (OpuCA), two transmembrane proteins (OpuCB and OpuCD) and a solute-binding protein (OpuCC).

It localises to the cell membrane. Functionally, involved in a high affinity multicomponent binding-protein-dependent transport system for glycine betaine, carnitine and choline; probably responsible for the translocation of the substrate across the membrane. The sequence is that of Glycine betaine/carnitine/choline transport system permease protein OpuCD (opuCD) from Bacillus subtilis (strain 168).